Here is a 3587-residue protein sequence, read N- to C-terminus: Surfactin synthase subunit 1 (3587 aa).

3 Carrier domains span residues 971-1046, 2010-2085, and 3038-3112; these read APRN…DHRE, APRN…ASAE, and APTT…ERAE. An O-(pantetheine 4'-phosphoryl)serine mark is found at Ser-1006, Ser-2045, and Ser-3073.

It belongs to the ATP-dependent AMP-binding enzyme family. Pantetheine 4'-phosphate serves as cofactor.

The protein operates within antibiotic biosynthesis; surfactin biosynthesis. Its function is as follows. This protein is a multifunctional enzyme able to activate and polymerize the amino acids Leu, Glu, Asp and Val. Activation sites for these AA consist of individual domains. The sequence is that of Surfactin synthase subunit 1 (srfAA) from Bacillus subtilis (strain 168).